The primary structure comprises 352 residues: DNA-directed RNA polymerase subunit alpha (352 aa).

An alpha N-terminal domain (alpha-NTD) region spans residues 1–236 (MTVNIRNWQE…DQLQVFVHFE (236 aa)). The interval 257-352 (SDVNQLNRFL…AKKLEQELLG (96 aa)) is alpha C-terminal domain (alpha-CTD).

It belongs to the RNA polymerase alpha chain family. As to quaternary structure, homodimer. The RNAP catalytic core consists of 2 alpha, 1 beta, 1 beta' and 1 omega subunit. When a sigma factor is associated with the core the holoenzyme is formed, which can initiate transcription.

It catalyses the reaction RNA(n) + a ribonucleoside 5'-triphosphate = RNA(n+1) + diphosphate. In terms of biological role, DNA-dependent RNA polymerase catalyzes the transcription of DNA into RNA using the four ribonucleoside triphosphates as substrates. The sequence is that of DNA-directed RNA polymerase subunit alpha from Sphingopyxis alaskensis (strain DSM 13593 / LMG 18877 / RB2256) (Sphingomonas alaskensis).